The sequence spans 200 residues: Large ribosomal subunit protein uL4 (200 aa).

The tract at residues 42–65 (TRAQKTRSEVSGGGAKPWRQKGTG) is disordered.

This sequence belongs to the universal ribosomal protein uL4 family. As to quaternary structure, part of the 50S ribosomal subunit.

In terms of biological role, one of the primary rRNA binding proteins, this protein initially binds near the 5'-end of the 23S rRNA. It is important during the early stages of 50S assembly. It makes multiple contacts with different domains of the 23S rRNA in the assembled 50S subunit and ribosome. Forms part of the polypeptide exit tunnel. This chain is Large ribosomal subunit protein uL4, found in Vibrio parahaemolyticus serotype O3:K6 (strain RIMD 2210633).